A 662-amino-acid chain; its full sequence is Glutathione hydrolase 7 (662 aa).

Residues 1-106 lie on the Cytoplasmic side of the membrane; it reads MAAENEASQE…AAECSCRQDG (106 aa). 4 positions are modified to phosphoserine: Ser-17, Ser-72, Ser-79, and Ser-83. The interval 26 to 90 is disordered; it reads SFPRLPEDEP…DGSPLRETRK (65 aa). Low complexity predominate over residues 72-83; the sequence is SSSSEMGSQDGS. A helical; Signal-anchor for type II membrane protein transmembrane segment spans residues 107–127; that stretch reads LTVIVTACLTFATGVTVALVM. At 128–662 the chain is on the extracellular side; sequence QIYFGDPQIF…SPDAAGATIL (535 aa). N-linked (GlcNAc...) asparagine glycans are attached at residues Asn-198, Asn-267, Asn-283, Asn-330, Asn-353, Asn-394, Asn-452, Asn-519, Asn-523, and Asn-586.

It belongs to the gamma-glutamyltransferase family. In terms of assembly, interacts with TLCD3A. As to quaternary structure, heterodimer composed of the light and heavy chains. The active site is located in the light chain. In terms of processing, cleaved by autocatalysis into a large and a small subunit and the autocatalytic cleavage is essential to the functional activation of the enzyme. In terms of tissue distribution, widely expressed, but at low level, except in the airway epithelial cells. Detected in brain, heart, kidney, liver, lung, spleen, testis and trachea.

It is found in the membrane. It catalyses the reaction an N-terminal (5-L-glutamyl)-[peptide] + an alpha-amino acid = 5-L-glutamyl amino acid + an N-terminal L-alpha-aminoacyl-[peptide]. The enzyme catalyses glutathione + H2O = L-cysteinylglycine + L-glutamate. It carries out the reaction an S-substituted glutathione + H2O = an S-substituted L-cysteinylglycine + L-glutamate. The protein operates within sulfur metabolism; glutathione metabolism. Its function is as follows. Hydrolyzes and transfers gamma-glutamyl moieties from glutathione and other gamma-glutamyl compounds to acceptors. The chain is Glutathione hydrolase 7 from Homo sapiens (Human).